We begin with the raw amino-acid sequence, 2562 residues long: Zinc finger homeobox protein 2 (2562 aa).

The segment covering 1–13 has biased composition (polar residues); the sequence is MATLNSASPSGTV. Disordered stretches follow at residues 1–88 and 337–410; these read MATL…PPKD and PSPP…DPPP. Residues 56–73 are compositionally biased toward basic and acidic residues; the sequence is GGERLESGSDLDPPKEIG. 2 C2H2-type zinc fingers span residues 446-469 and 501-525; these read LKCPKCNWHYKYQQTLDVHMREKH and YRCDVCNYSTTTKGNLSIHMQSDKH. Disordered stretches follow at residues 530–559, 603–651, and 669–705; these read QGFQAGPGGQASPPEASLPPTSVGDKEPKT, PPGL…PDKP, and RKFPTAAPGSLSPETHLPPSQLLGSSSDGLPTSPSPD. Pro residues predominate over residues 609-622; the sequence is PGPPPPPGAAPTNP. A compositionally biased stretch (polar residues) spans 690-704; it reads LLGSSSDGLPTSPSP. 3 C2H2-type zinc fingers span residues 752–776, 815–839, and 864–888; these read HRCKLCCYGTQLKANFQLHLKTDKH, LRCNICDFESNSKEKMQLHTRGSAH, and YHCLLCAWDTPSRLALLQHLRTPAH. The interval 923-966 is disordered; it reads RLQTPGKASDTPLAQPPTSEKDAQNKTEQQASEVTEDRSGPPRD. The segment at 1003–1026 adopts a C2H2-type 6 zinc-finger fold; it reads YRCPLCQEQLVGRPALHFHLSHLH. Disordered stretches follow at residues 1058 to 1126 and 1140 to 1166; these read NPVE…PAPR and MSEEEEGAMGEPRSAEPTPADSRHPLT. Composition is skewed to pro residues over residues 1091–1101 and 1114–1124; these read SPDPPLEPPLA and DQPPSPAPSPA. 2 C2H2-type zinc fingers span residues 1185–1211 and 1242–1266; these read YKCTVCKESFTQKNILLVHYNSVSHLH and FKCTVCRVSYNQSSTLEIHMRSVLH. Over residues 1278–1305 the composition is skewed to basic and acidic residues; it reads RAEGAERGQEEFKEGETEGEAGTEKKGP. Residues 1278-1313 form a disordered region; it reads RAEGAERGQEEFKEGETEGEAGTEKKGPDPGGFMSG. The segment at 1474–1497 adopts a C2H2-type 9 zinc-finger fold; the sequence is LACGACGKLFSNMLILKTHEEHVH. The interval 1520-1584 is disordered; the sequence is LYPPPVEPPK…EGSRGSLPPA (65 aa). Residues 1521 to 1531 show a composition bias toward pro residues; sequence YPPPVEPPKPP. Positions 1589–1648 form a DNA-binding region, homeobox 1; it reads RRFSRTKFTEFQTQALQSFFETSAYPKDGEVERLASLLGLASRVVVVWFQNARQKARKNA. A C2H2-type 10; degenerate zinc finger spans residues 1664–1687; that stretch reads SGCRRCHATFACVFELVRHLKKCY. The segment at 1689–1760 is disordered; sequence DQPPEEEEEA…EGKAPPSPPV (72 aa). A compositionally biased stretch (acidic residues) spans 1690–1713; sequence QPPEEEEEAERGEEEEEVEEEEAE. Positions 1743 to 1752 are enriched in basic and acidic residues; that stretch reads TRPESKESEG. The C2H2-type 11 zinc-finger motif lies at 1761-1783; the sequence is YACDQCAASFPSQDLLTTHHRLH. Disordered stretches follow at residues 1814 to 1853, 1907 to 1934, 1971 to 2057, 2114 to 2136, 2186 to 2210, 2263 to 2313, and 2391 to 2429; these read SGTSSVTGTPLKRKHDDGSLSPTGSEAGGGGEGEPPKDKR, RKGQFRSTPGGVAGPAVKPTVPPSPAPF, PLPF…DSMG, KKAKLQGTAPPGSGGSSEGTSAA, PAPETPLAPKGPPATTPASSVPLGA, QTAG…PNSS, and LQQPPQAPEPTATAPPKPPELPASGEGESSEADELLTGS. A DNA-binding region (homeobox 2) is located at residues 1851-1910; the sequence is DKRLRTTILPEQLEILYRWYMQDSNPTRKMLDCISEEVGLKKRVVQVWFQNTRARERKGQ. Residues 1985–1996 show a composition bias toward pro residues; that stretch reads TPEPPPPLPPPA. The span at 2008–2037 shows a compositional bias: low complexity; it reads KASPESEACSPSAGDLSDSSASSLAEPESP. Over residues 2038–2051 the composition is skewed to gly residues; that stretch reads GAGGTSGGPGGGTG. The homeobox 3 DNA-binding region spans 2058–2117; it reads QRRYRTQMSSLQLKIMKACYEAYRTPTMQECEVLGEEIGLPKRVIQVWFQNARAKEKKAK. The segment covering 2188 to 2200 has biased composition (pro residues); it reads PETPLAPKGPPAT. A compositionally biased stretch (polar residues) spans 2275–2286; that stretch reads PVSNQTNSSTDP. Residues 2295–2305 show a composition bias toward basic and acidic residues; sequence SGDKVSGERKP. The span at 2395-2411 shows a compositional bias: pro residues; the sequence is PQAPEPTATAPPKPPEL. A C2H2-type 12; degenerate zinc finger spans residues 2441–2461; sequence YLCRQCKMAFDGEAPATAHQR. The segment at 2485-2509 adopts a C2H2-type 13 zinc-finger fold; the sequence is YHCLACEVLLSGREALASHLRSSAH. 2 disordered regions span residues 2506–2525 and 2540–2562; these read SSAHRRKAAPPPGGPPITVT and EEARLPHTDPNPKTTTTSTLLAL. Residues 2553-2562 show a composition bias toward low complexity; the sequence is TTTTSTLLAL.

Expressed in brain (at protein level). Expressed at the highest levels in the pyramidal cell layer of the hippocampus, the suprachiasmatic nucleus, laterodorsal thalamic nucleus, lateral geniculate nucleus, substantia nigra pars compacta, and magnocellular part of the red nucleus (at protein level). Highly expressed in dorsal root ganglia. Expressed at lower levels in kidney, stomach, liver, heart and testis.

The protein localises to the nucleus. Functionally, transcriptional regulator that is critical for the regulation of pain perception and processing of noxious stimuli. This chain is Zinc finger homeobox protein 2, found in Mus musculus (Mouse).